Here is a 1051-residue protein sequence, read N- to C-terminus: Protein transport protein Sec16B (1051 aa).

Positions M1–L23 are enriched in polar residues. Residues M1 to P109 are disordered. Residues D39–Q63 are compositionally biased toward basic and acidic residues. Residues S64–V77 are compositionally biased toward polar residues. Phosphoserine is present on residues S70 and S137. A disordered region spans residues E157–K203. Positions F163–N177 are enriched in polar residues. Phosphoserine is present on residues S182, S185, and S245. Positions A263–T708 are central conserved domain (CCD); required for localization to endoplasmic reticulum exit sites. Residues L703–D715 show a composition bias toward basic and acidic residues. Disordered stretches follow at residues L703–T754, S798–L820, and T850–C1051. Residues G737–T754 are compositionally biased toward polar residues. Residues S798 to G809 are compositionally biased toward low complexity. Phosphothreonine is present on T850. S860, S863, S866, S874, and S875 each carry phosphoserine. Positions G877–N897 are enriched in basic and acidic residues. The segment covering S900–S920 has biased composition (low complexity). Positions G921 to E932 are enriched in acidic residues. Low complexity predominate over residues R936–L947. A compositionally biased stretch (gly residues) spans E984–G993. Polar residues predominate over residues N1022–R1037.

It belongs to the SEC16 family. As to quaternary structure, SEC16A and SEC16B are each present in multiple copies in a heteromeric complex. Interacts with TFG. Interacts with SEC13. As to expression, liver.

The protein resides in the endoplasmic reticulum membrane. Its subcellular location is the golgi apparatus membrane. In terms of biological role, plays a role in the organization of the endoplasmic reticulum exit sites (ERES), also known as transitional endoplasmic reticulum (tER). Required for secretory cargo traffic from the endoplasmic reticulum to the Golgi apparatus. Involved in peroxisome biogenesis. Regulates the transport of peroxisomal biogenesis factors PEX3 and PEX16 from the ER to peroxisomes. In Mus musculus (Mouse), this protein is Protein transport protein Sec16B (Sec16b).